We begin with the raw amino-acid sequence, 356 residues long: MAKSKKIVFTGGGTVGHVTLNLILIPKFLKDGWEVHYIGDKHGVEHEQIDKSGLDVTFHSIATGKLRRYFSWQNMLDVFKVGWGILQSIAIIAKIRPQALFSKGGFVSVPPVIASKLLRVPVYVHESDLSMGLANKIAYKFATTMFTTFEQSKTLVKTRHVGAITKVGMTRFDNSDQLDKIKEQFDEKLKTVLFIGGSAGAKVFNDFISKTPELIENYNIINISGDSSLNTLERHLYRVDYVTDLYQPLMDMADLVVTRGGSNTIFELLAMKKLHLIVPLGKEASRGDQLENADYFERKGYARQLQEPELSWETLKHELEQLVEHAETYKEAMAKSEEITSPDDFYNLLVTSISNK.

2 residues coordinate UDP-N-acetyl-alpha-D-glucosamine: serine 198 and glutamine 289.

This sequence belongs to the glycosyltransferase 28 family. MurG subfamily.

Its subcellular location is the cell membrane. The enzyme catalyses Mur2Ac(oyl-L-Ala-gamma-D-Glu-L-Lys-D-Ala-D-Ala)-di-trans,octa-cis-undecaprenyl diphosphate + UDP-N-acetyl-alpha-D-glucosamine = beta-D-GlcNAc-(1-&gt;4)-Mur2Ac(oyl-L-Ala-gamma-D-Glu-L-Lys-D-Ala-D-Ala)-di-trans,octa-cis-undecaprenyl diphosphate + UDP + H(+). Its pathway is cell wall biogenesis; peptidoglycan biosynthesis. In terms of biological role, cell wall formation. Catalyzes the transfer of a GlcNAc subunit on undecaprenyl-pyrophosphoryl-MurNAc-pentapeptide (lipid intermediate I) to form undecaprenyl-pyrophosphoryl-MurNAc-(pentapeptide)GlcNAc (lipid intermediate II). The chain is UDP-N-acetylglucosamine--N-acetylmuramyl-(pentapeptide) pyrophosphoryl-undecaprenol N-acetylglucosamine transferase from Streptococcus thermophilus (strain CNRZ 1066).